The following is a 175-amino-acid chain: Endoribonuclease YbeY (175 aa).

Zn(2+)-binding residues include His-137, His-141, and His-147.

This sequence belongs to the endoribonuclease YbeY family. Zn(2+) is required as a cofactor.

It is found in the cytoplasm. Functionally, single strand-specific metallo-endoribonuclease involved in late-stage 70S ribosome quality control and in maturation of the 3' terminus of the 16S rRNA. The polypeptide is Endoribonuclease YbeY (Burkholderia ambifaria (strain ATCC BAA-244 / DSM 16087 / CCUG 44356 / LMG 19182 / AMMD) (Burkholderia cepacia (strain AMMD))).